Reading from the N-terminus, the 634-residue chain is tRNA uridine 5-carboxymethylaminomethyl modification enzyme MnmG (634 aa).

14-19 (GGGHAG) serves as a coordination point for FAD. 279 to 293 (GPRYCPSIEDKVVRF) contacts NAD(+).

It belongs to the MnmG family. As to quaternary structure, homodimer. Heterotetramer of two MnmE and two MnmG subunits. FAD serves as cofactor.

The protein resides in the cytoplasm. Functionally, NAD-binding protein involved in the addition of a carboxymethylaminomethyl (cmnm) group at the wobble position (U34) of certain tRNAs, forming tRNA-cmnm(5)s(2)U34. The polypeptide is tRNA uridine 5-carboxymethylaminomethyl modification enzyme MnmG (Xanthomonas axonopodis pv. citri (strain 306)).